Reading from the N-terminus, the 792-residue chain is 5-methyltetrahydropteroyltriglutamate--homocysteine methyltransferase (792 aa).

5-methyltetrahydropteroyltri-L-glutamate-binding positions include 16-19 (RELK) and Lys-112. Residues 432 to 434 (IGS) and Glu-485 contribute to the L-homocysteine site. Residues 432–434 (IGS) and Glu-485 each bind L-methionine. 5-methyltetrahydropteroyltri-L-glutamate-binding positions include 516-517 (RC) and Trp-562. Asp-600 contributes to the L-homocysteine binding site. Position 600 (Asp-600) interacts with L-methionine. 5-methyltetrahydropteroyltri-L-glutamate is bound at residue Glu-606. The Zn(2+) site is built by His-642, Cys-644, and Glu-666. The active-site Proton donor is His-695. Zn(2+) is bound at residue Cys-727.

This sequence belongs to the vitamin-B12 independent methionine synthase family. It depends on Zn(2+) as a cofactor.

The enzyme catalyses 5-methyltetrahydropteroyltri-L-glutamate + L-homocysteine = tetrahydropteroyltri-L-glutamate + L-methionine. It functions in the pathway amino-acid biosynthesis; L-methionine biosynthesis via de novo pathway; L-methionine from L-homocysteine (MetE route): step 1/1. Functionally, catalyzes the transfer of a methyl group from 5-methyltetrahydrofolate to homocysteine resulting in methionine formation. This is 5-methyltetrahydropteroyltriglutamate--homocysteine methyltransferase from Cupriavidus necator (strain ATCC 17699 / DSM 428 / KCTC 22496 / NCIMB 10442 / H16 / Stanier 337) (Ralstonia eutropha).